Here is a 548-residue protein sequence, read N- to C-terminus: Protoporphyrinogen oxidase, chloroplastic (548 aa).

Residues 1–50 (MTTTPIANHPNIFTHQSSSSPLAFLNRTSFIPFSSISKRNSVNCNGWRTR) constitute a chloroplast transit peptide. FAD contacts are provided by residues 78–83 (GAGISG), 101–102 (EA), and 123–126 (GPNS). A compositionally biased stretch (basic and acidic residues) spans 265-279 (KERSSTPKAPRDPRL). Residues 265 to 287 (KERSSTPKAPRDPRLPKPKGQTV) are disordered. An FAD-binding site is contributed by 522–524 (VAL).

It belongs to the protoporphyrinogen/coproporphyrinogen oxidase family. Protoporphyrinogen oxidase subfamily. Homodimer. FAD serves as cofactor.

It is found in the plastid. It localises to the chloroplast. The catalysed reaction is protoporphyrinogen IX + 3 O2 = protoporphyrin IX + 3 H2O2. It participates in porphyrin-containing compound metabolism; protoporphyrin-IX biosynthesis; protoporphyrin-IX from protoporphyrinogen-IX: step 1/1. Its pathway is porphyrin-containing compound metabolism; chlorophyll biosynthesis. Functionally, catalyzes the 6-electron oxidation of protoporphyrinogen-IX to form protoporphyrin-IX. This Nicotiana tabacum (Common tobacco) protein is Protoporphyrinogen oxidase, chloroplastic (PPXI).